The chain runs to 161 residues: Protein PLASTID TRANSCRIPTIONALLY ACTIVE 7 (161 aa).

The transit peptide at 1 to 32 (MASFTCSSPSSILPIIDTRSGNLRCTFQSQVS) directs the protein to the chloroplast.

As to quaternary structure, component of the transcriptionally active chromosome (TAC) complexes. Interacts with FLN1, PTAC10, PTAC12/HMR/PAP5 and PTAC14. Binds to SL1/MTERF3. As to expression, mostly expressed in leaves, flowers and seedlings, and, to a lower extent, in roots and stems.

The protein localises to the plastid. Its subcellular location is the chloroplast. In terms of biological role, essential for chloroplast development, especially for thylakoid formation. Involved in plastid gene expression, probably by maintaining plastid-encoded RNA polymerase (PEP) activity. In Arabidopsis thaliana (Mouse-ear cress), this protein is Protein PLASTID TRANSCRIPTIONALLY ACTIVE 7.